A 336-amino-acid chain; its full sequence is uncharacterized protein (336 aa).

An ATP-grasp domain is found at K123 to D323.

Belongs to the D-alanine--D-alanine ligase family.

Its function is as follows. Could be involved in the biosynthesis of a cell wall component. This is an uncharacterized protein from Sinorhizobium fredii (strain NBRC 101917 / NGR234).